The sequence spans 296 residues: Remorin 4.1 (296 aa).

Disordered stretches follow at residues 1–78 (MLTL…SGEN), 121–142 (TRIGENDDVGDHGQVPEEDSNP), and 242–266 (EKTQNKVAKAQRKAEERRATAEGKR). Residues 21-39 (ASDRRDETPSSEIVVRDIH) show a composition bias toward basic and acidic residues. 2 stretches are compositionally biased toward polar residues: residues 41–53 (MTTTTELTRPQQR) and 62–78 (PSRSIAFSDGTTSSGEN). Composition is skewed to basic and acidic residues over residues 121 to 135 (TRIGENDDVGDHGQV) and 253 to 266 (RKAEERRATAEGKR). The stretch at 226–261 (MKKIERKLEDRRAKAMEKTQNKVAKAQRKAEERRAT) forms a coiled coil.

Belongs to the remorin family. Forms homodimer and heterodimer with REM4.2. Interacts with KIN11. Phosphorylated by KIN11. In terms of processing, probably ubiquitinated and degraded by the 26S proteasome pathway. Predominantly detected in bud, stem, root, flower, silique, and leaves, and enhanced dramatically in senescence leaf.

It localises to the cell membrane. Collaborates with REM4.2 to positively regulate the BCTV and BSCTV susceptibility. In Arabidopsis thaliana (Mouse-ear cress), this protein is Remorin 4.1.